The sequence spans 325 residues: Melanocortin receptor 5 (325 aa).

Residues 1–37 (MNSSFHLHFLDLGLNATEGNLSGLSVRNASSPCEDMG) are Extracellular-facing. Residues N2, N15, N20, and N28 are each glycosylated (N-linked (GlcNAc...) asparagine). A helical transmembrane segment spans residues 38–61 (IAVEVFLALGLISLLENILVIGAI). The Cytoplasmic segment spans residues 62-73 (VRNRNLHIPMYF). A helical transmembrane segment spans residues 74–97 (FVGSLAVADMLVSLSNFWETITIY). Topologically, residues 98–114 (LLTNKHLVMADASVRHL) are extracellular. The helical transmembrane segment at 115 to 138 (DNVFDSMICISVVASMCSLLAIAV) threads the bilayer. Topologically, residues 139 to 155 (DRYVTIFCRLRYQRIMT) are cytoplasmic. A helical transmembrane segment spans residues 156-179 (GRRSGAIIAGIWAFCTSCGTVFIV). Residues 180-186 (YYESTYV) lie on the Extracellular side of the membrane. The helical transmembrane segment at 187–211 (VVCLIAMFLTMLLLMASLYTHMFLL) threads the bilayer. At 212–239 (ARTHVRRIAALPGHSSVRQRTGVKGAIT) the chain is on the cytoplasmic side. The helical transmembrane segment at 240–265 (LAMLLGVFIICWAPFFLHLILMISCP) threads the bilayer. Residues 266–273 (QNLYCSCF) lie on the Extracellular side of the membrane. The helical transmembrane segment at 274–297 (MSHFNMYLILIMCNSVIDPLIYAF) threads the bilayer. Residues 298 to 325 (RSQEMRKTFKEIVCFQGFRTPCRFPSTY) are Cytoplasmic-facing. The S-palmitoyl cysteine moiety is linked to residue C311.

The protein belongs to the G-protein coupled receptor 1 family.

It is found in the cell membrane. Functionally, receptor for MSH (alpha, beta and gamma) and ACTH. The activity of this receptor is mediated by G proteins which activate adenylate cyclase. This receptor is a possible mediator of the immunomodulation properties of melanocortins. The protein is Melanocortin receptor 5 (MC5R) of Ovis aries (Sheep).